Consider the following 280-residue polypeptide: Chaperone for lacto-N-biosidase (280 aa).

A signal peptide spans 1-37 (MPRRHRFAAAIAAVAVAAVLLVTLTVAVVTHGDGAFA).

As to quaternary structure, homodimer.

The protein localises to the secreted. In terms of biological role, chaperone required for active expression of the lacto-N-biosidase LnbX. The protein is Chaperone for lacto-N-biosidase of Bifidobacterium longum subsp. longum (strain ATCC 15707 / DSM 20219 / JCM 1217 / NCTC 11818 / E194b).